The sequence spans 216 residues: MOB kinase activator-like 2A (216 aa).

The Zn(2+) site is built by cysteine 81, cysteine 86, histidine 162, and histidine 167.

It belongs to the MOB1/phocein family.

It localises to the nucleus. In Arabidopsis thaliana (Mouse-ear cress), this protein is MOB kinase activator-like 2A.